A 286-amino-acid chain; its full sequence is 5'-3' exonuclease (286 aa).

A 5'-3' exonuclease domain is found at 172 to 270 (IKPKEFIDFL…IKLKDIILKK (99 aa)).

5'-3' exonuclease acting preferentially on double-stranded DNA. This is 5'-3' exonuclease from Buchnera aphidicola subsp. Acyrthosiphon pisum (strain APS) (Acyrthosiphon pisum symbiotic bacterium).